Consider the following 671-residue polypeptide: DNA ligase (671 aa).

Residues 34–38, 83–84, and Glu-115 each bind NAD(+); these read DAEYD and SL. Lys-117 functions as the N6-AMP-lysine intermediate in the catalytic mechanism. The NAD(+) site is built by Arg-138, Glu-174, Lys-291, and Lys-315. Zn(2+)-binding residues include Cys-409, Cys-412, Cys-427, and Cys-432. Positions 589–671 constitute a BRCT domain; it reads RSGGPLTGKS…LQMIDTLEEA (83 aa).

It belongs to the NAD-dependent DNA ligase family. LigA subfamily. Mg(2+) is required as a cofactor. The cofactor is Mn(2+).

The catalysed reaction is NAD(+) + (deoxyribonucleotide)n-3'-hydroxyl + 5'-phospho-(deoxyribonucleotide)m = (deoxyribonucleotide)n+m + AMP + beta-nicotinamide D-nucleotide.. Its function is as follows. DNA ligase that catalyzes the formation of phosphodiester linkages between 5'-phosphoryl and 3'-hydroxyl groups in double-stranded DNA using NAD as a coenzyme and as the energy source for the reaction. It is essential for DNA replication and repair of damaged DNA. The protein is DNA ligase of Syntrophotalea carbinolica (strain DSM 2380 / NBRC 103641 / GraBd1) (Pelobacter carbinolicus).